A 20-amino-acid polypeptide reads, in one-letter code: WESGDLELFDLVEEVXLNFY.

Topologically, residues 1–20 (WESGDLELFDLVEEVXLNFY) are lumenal. The 3-residue stretch at 18–20 (NFY) folds into the J domain.

In terms of assembly, interacts (via SANT 2 domain) with SERPINA3; the interaction delays the formation of the covalent inhibitory complex SERPINA3-chymotrypsin, but does not alter the catalytic activity of SERPINA3. Interacts (via SANT 2 domain) with ITIH4 (via C-terminus); the interaction protects ITIH4 against in vitro cleavage by kallikrein. Interacts (via J domain) with HSPA5. Interacts (via cytosolic domain) with ribosomes.

It localises to the endoplasmic reticulum membrane. The protein resides in the nucleus membrane. It is found in the microsome membrane. The chain is DnaJ homolog subfamily C member 1 (DNAJC1) from Canis lupus familiaris (Dog).